Reading from the N-terminus, the 792-residue chain is Phenylalanine--tRNA ligase beta subunit (792 aa).

The region spanning 39–154 (LYSFASVITA…EATPLGEDLA (116 aa)) is the tRNA-binding domain. The 78-residue stretch at 403–480 (RELKEVALRP…ESWNIETQNP (78 aa)) folds into the B5 domain. Mg(2+) is bound by residues D456, D462, E465, and E466. One can recognise an FDX-ACB domain in the interval 695–791 (AIYPSSFRDL…LLTDTKGTIN (97 aa)).

This sequence belongs to the phenylalanyl-tRNA synthetase beta subunit family. Type 1 subfamily. Tetramer of two alpha and two beta subunits. The cofactor is Mg(2+).

It is found in the cytoplasm. The enzyme catalyses tRNA(Phe) + L-phenylalanine + ATP = L-phenylalanyl-tRNA(Phe) + AMP + diphosphate + H(+). The protein is Phenylalanine--tRNA ligase beta subunit (pheT) of Chlamydia pneumoniae (Chlamydophila pneumoniae).